Here is a 435-residue protein sequence, read N- to C-terminus: D-amino acid dehydrogenase (435 aa).

Val3 to Trp17 is an FAD binding site.

It belongs to the DadA oxidoreductase family. The cofactor is FAD.

It catalyses the reaction a D-alpha-amino acid + A + H2O = a 2-oxocarboxylate + AH2 + NH4(+). It functions in the pathway amino-acid degradation; D-alanine degradation; NH(3) and pyruvate from D-alanine: step 1/1. Functionally, oxidative deamination of D-amino acids. The sequence is that of D-amino acid dehydrogenase from Xylella fastidiosa (strain M12).